The chain runs to 344 residues: MIPVFDPVALGLYMLGYLFMFVIAATVAPRVAGAVSGRLTLYGAMALTGVMIVLTTAFVIYLFVLVAAPTLATVSFLVGLIAFVVLMNLLTYVASPYIINASYGARPDPRLQQIVDEVAARLGAPFKLKAVVVDGPPNAFAYGNFLTGRYVAVTSGMLSLVDRRELEAVIGHEIGHHLHRDNAIMLLFGVLPSVVYYLGVTAVHMGLGSGNSRGGNAALLAVGVVAVLASFLIQLLVLAFSRLREYYADTAGAKAAGKEAMQFALAKIHKFYFMAPEARQAVSESKFRALFIYALVNAVANPFVTITRAEVEQIKRANYSALQEVFSTHPPIPKRLRFLDQLPL.

Transmembrane regions (helical) follow at residues 8-28 (VALG…ATVA), 46-66 (ALTG…FVLV), and 74-94 (VSFL…TYVA). Residue His172 coordinates Zn(2+). Glu173 is a catalytic residue. Zn(2+) is bound at residue His176. A run of 2 helical transmembrane segments spans residues 183 to 203 (AIML…VTAV) and 220 to 240 (LAVG…VLAF). Glu245 lines the Zn(2+) pocket.

It belongs to the peptidase M48B family. It depends on Zn(2+) as a cofactor.

It is found in the cell membrane. The protein is Protease HtpX homolog of Pyrobaculum calidifontis (strain DSM 21063 / JCM 11548 / VA1).